A 277-amino-acid chain; its full sequence is 4-hydroxy-3-methylbut-2-enyl diphosphate reductase (277 aa).

[4Fe-4S] cluster is bound at residue Cys12. Residues His36 and His70 each coordinate (2E)-4-hydroxy-3-methylbut-2-enyl diphosphate. Dimethylallyl diphosphate-binding residues include His36 and His70. Positions 36 and 70 each coordinate isopentenyl diphosphate. Cys92 provides a ligand contact to [4Fe-4S] cluster. His120 serves as a coordination point for (2E)-4-hydroxy-3-methylbut-2-enyl diphosphate. His120 serves as a coordination point for dimethylallyl diphosphate. An isopentenyl diphosphate-binding site is contributed by His120. The Proton donor role is filled by Glu122. A (2E)-4-hydroxy-3-methylbut-2-enyl diphosphate-binding site is contributed by Thr158. Cys186 lines the [4Fe-4S] cluster pocket. Residues Ser214, Asn216, and Ser258 each coordinate (2E)-4-hydroxy-3-methylbut-2-enyl diphosphate. Dimethylallyl diphosphate contacts are provided by Ser214, Asn216, and Ser258. Isopentenyl diphosphate contacts are provided by Ser214, Asn216, and Ser258.

This sequence belongs to the IspH family. Requires [4Fe-4S] cluster as cofactor.

It carries out the reaction isopentenyl diphosphate + 2 oxidized [2Fe-2S]-[ferredoxin] + H2O = (2E)-4-hydroxy-3-methylbut-2-enyl diphosphate + 2 reduced [2Fe-2S]-[ferredoxin] + 2 H(+). The catalysed reaction is dimethylallyl diphosphate + 2 oxidized [2Fe-2S]-[ferredoxin] + H2O = (2E)-4-hydroxy-3-methylbut-2-enyl diphosphate + 2 reduced [2Fe-2S]-[ferredoxin] + 2 H(+). It functions in the pathway isoprenoid biosynthesis; dimethylallyl diphosphate biosynthesis; dimethylallyl diphosphate from (2E)-4-hydroxy-3-methylbutenyl diphosphate: step 1/1. It participates in isoprenoid biosynthesis; isopentenyl diphosphate biosynthesis via DXP pathway; isopentenyl diphosphate from 1-deoxy-D-xylulose 5-phosphate: step 6/6. Functionally, catalyzes the conversion of 1-hydroxy-2-methyl-2-(E)-butenyl 4-diphosphate (HMBPP) into a mixture of isopentenyl diphosphate (IPP) and dimethylallyl diphosphate (DMAPP). Acts in the terminal step of the DOXP/MEP pathway for isoprenoid precursor biosynthesis. The protein is 4-hydroxy-3-methylbut-2-enyl diphosphate reductase of Campylobacter jejuni subsp. jejuni serotype O:2 (strain ATCC 700819 / NCTC 11168).